The sequence spans 308 residues: MTERRRHAIDLDDFTATEIEEILETAESMREVLSREIKQVPALRGKTVVNMFFEESTRTRISFELAARALSANVVAFTARGSSVEKGESLVDTVRTLQALGADIIVMRHSRSGAPYLVARHFRGALINAGDGRHAHPTQALLDLYTMRSHHGQIRDLNVVIVGDILHSRVVRSNLWGLTRLGARVTLCGPPTLIGPSAFWTATWPTVRIAYDLDPLLAEADVVMALRLQKERMQHGLLPALREYTRIYGLTPERLARLPAHAIVMHPGPMNEGIEIFPEVATSATAVIEEQVTNGVAVRMALLYRMAG.

Residues Arg-58 and Thr-59 each contribute to the carbamoyl phosphate site. Lys-86 is an L-aspartate binding site. Residues Arg-108, His-136, and Gln-139 each coordinate carbamoyl phosphate. 2 residues coordinate L-aspartate: Arg-169 and Arg-227. Carbamoyl phosphate is bound by residues Gly-268 and Pro-269.

It belongs to the aspartate/ornithine carbamoyltransferase superfamily. ATCase family. In terms of assembly, heterododecamer (2C3:3R2) of six catalytic PyrB chains organized as two trimers (C3), and six regulatory PyrI chains organized as three dimers (R2).

It carries out the reaction carbamoyl phosphate + L-aspartate = N-carbamoyl-L-aspartate + phosphate + H(+). It participates in pyrimidine metabolism; UMP biosynthesis via de novo pathway; (S)-dihydroorotate from bicarbonate: step 2/3. Its function is as follows. Catalyzes the condensation of carbamoyl phosphate and aspartate to form carbamoyl aspartate and inorganic phosphate, the committed step in the de novo pyrimidine nucleotide biosynthesis pathway. This chain is Aspartate carbamoyltransferase catalytic subunit, found in Chloroflexus aggregans (strain MD-66 / DSM 9485).